A 248-amino-acid chain; its full sequence is Ubiquinone biosynthesis O-methyltransferase (248 aa).

4 residues coordinate S-adenosyl-L-methionine: Arg-41, Gly-72, Asp-93, and Met-136.

It belongs to the methyltransferase superfamily. UbiG/COQ3 family.

It carries out the reaction a 3-demethylubiquinol + S-adenosyl-L-methionine = a ubiquinol + S-adenosyl-L-homocysteine + H(+). The enzyme catalyses a 3-(all-trans-polyprenyl)benzene-1,2-diol + S-adenosyl-L-methionine = a 2-methoxy-6-(all-trans-polyprenyl)phenol + S-adenosyl-L-homocysteine + H(+). It participates in cofactor biosynthesis; ubiquinone biosynthesis. Functionally, O-methyltransferase that catalyzes the 2 O-methylation steps in the ubiquinone biosynthetic pathway. The sequence is that of Ubiquinone biosynthesis O-methyltransferase from Sinorhizobium fredii (strain NBRC 101917 / NGR234).